The following is a 162-amino-acid chain: Small ribosomal subunit protein uS13 (162 aa).

A disordered region spans residues 142–162; sequence RGQRTKSTGRRGSTVGVSRKK.

The protein belongs to the universal ribosomal protein uS13 family. Part of the 30S ribosomal subunit. Forms a loose heterodimer with protein S19. Forms two bridges to the 50S subunit in the 70S ribosome.

In terms of biological role, located at the top of the head of the 30S subunit, it contacts several helices of the 16S rRNA. In the 70S ribosome it contacts the 23S rRNA (bridge B1a) and protein L5 of the 50S subunit (bridge B1b), connecting the 2 subunits; these bridges are implicated in subunit movement. This Methanosarcina acetivorans (strain ATCC 35395 / DSM 2834 / JCM 12185 / C2A) protein is Small ribosomal subunit protein uS13.